Reading from the N-terminus, the 1328-residue chain is Myb-binding protein 1A (1328 aa).

The segment at 1-22 is disordered; the sequence is MESRDPAQPMSPGEATQSGARP. The interaction with MYB stretch occupies residues 1–582; sequence MESRDPAQPM…WDRMLQTLKE (582 aa). Ser11 is subject to Phosphoserine. N6-acetyllysine occurs at positions 71 and 158. 2 short sequence motifs (nuclear export signal) span residues 240-258 and 263-281; these read SDEN…ASSV and KLPA…EDKF. The tract at residues 698–753 is disordered; sequence SEDENDRVVVTDDSDERRLKGAEDKSEEGEDNRSSESEEESEGEESEEEERDGDVD. A compositionally biased stretch (basic and acidic residues) spans 703–721; sequence DRVVVTDDSDERRLKGAED. The segment covering 734–752 has biased composition (acidic residues); that stretch reads SEEESEGEESEEEERDGDV. The residue at position 775 (Ser775) is a Phosphoserine. The interval 1146–1292 is disordered; that stretch reads RPKLEKKDAK…KKGVLGKSPL (147 aa). Residues 1147-1156 are compositionally biased toward basic and acidic residues; the sequence is PKLEKKDAKE. A Glycyl lysine isopeptide (Lys-Gly) (interchain with G-Cter in SUMO2) cross-link involves residue Lys1148. The interval 1151 to 1328 is required for nuclear and nucleolar localization; it reads KKDAKEIPSA…KAQVRKAGKP (178 aa). Phosphoserine is present on residues Ser1159 and Ser1163. Basic residues predominate over residues 1166-1184; that stretch reads SKKRKKKGFLPETKKRKKR. Residue Ser1186 is modified to Phosphoserine. Residues Thr1190 and Thr1196 each carry the phosphothreonine modification. Ser1207 is subject to Phosphoserine. Basic residues predominate over residues 1209-1218; sequence GRKKRNRTKA. A Phosphoserine modification is found at Ser1232. Thr1239 is subject to Phosphothreonine. A Phosphoserine modification is found at Ser1241. The residue at position 1244 (Thr1244) is a Phosphothreonine. 2 positions are modified to phosphoserine: Ser1248 and Ser1267. The residue at position 1269 (Thr1269) is a Phosphothreonine. Phosphoserine occurs at positions 1290 and 1303. The segment at 1306 to 1328 is disordered; the sequence is IRSPSLLQSGAKKKAQVRKAGKP. Arg1307 is modified (citrulline). Phosphoserine occurs at positions 1308, 1310, and 1314. Residues 1316-1328 are compositionally biased toward basic residues; sequence AKKKAQVRKAGKP.

Belongs to the MYBBP1A family. As to quaternary structure, binds to and represses JUN and MYB via the leucine zipper regions present in these proteins. Also binds to and represses PPARGC1A: this interaction is abrogated when PPARGC1A is phosphorylated by MAPK1/ERK. Binds to and stimulates transcription by AHR. Binds to KPNA2. Interacts with CLOCK and CRY1. Component of the B-WICH complex, at least composed of SMARCA5/SNF2H, BAZ1B/WSTF, SF3B1, DEK, MYO1C, ERCC6, MYBBP1A and DDX21. Post-translationally, citrullinated by PADI4.

The protein resides in the cytoplasm. The protein localises to the nucleus. It localises to the nucleolus. In terms of biological role, may activate or repress transcription via interactions with sequence specific DNA-binding proteins. Repression may be mediated at least in part by histone deacetylase activity (HDAC activity). Acts as a corepressor and in concert with CRY1, represses the transcription of the core circadian clock component PER2. Preferentially binds to dimethylated histone H3 'Lys-9' (H3K9me2) on the PER2 promoter. Has a role in rRNA biogenesis together with PWP1. The chain is Myb-binding protein 1A (MYBBP1A) from Homo sapiens (Human).